The primary structure comprises 320 residues: Tyrosine phosphatase H3 (320 aa).

The Tyrosine-protein phosphatase domain occupies 22–309 (NFWEFVRLEH…AFCYKAVRYA (288 aa)). The active-site Phosphocysteine intermediate is cysteine 250.

This sequence belongs to the protein-tyrosine phosphatase family.

The catalysed reaction is O-phospho-L-tyrosyl-[protein] + H2O = L-tyrosyl-[protein] + phosphate. Its function is as follows. Suppresses host immune cell adhesion and phagocytosis. The protein is Tyrosine phosphatase H3 (H3) of Microplitis demolitor (Parasitoid wasp).